The primary structure comprises 253 residues: DNA repair protein RecO (253 aa).

This sequence belongs to the RecO family.

Involved in DNA repair and RecF pathway recombination. This chain is DNA repair protein RecO, found in Dehalococcoides mccartyi (strain CBDB1).